We begin with the raw amino-acid sequence, 168 residues long: Endoribonuclease YbeY (168 aa).

Residues His-123, His-127, and His-133 each contribute to the Zn(2+) site.

The protein belongs to the endoribonuclease YbeY family. It depends on Zn(2+) as a cofactor.

It is found in the cytoplasm. In terms of biological role, single strand-specific metallo-endoribonuclease involved in late-stage 70S ribosome quality control and in maturation of the 3' terminus of the 16S rRNA. The chain is Endoribonuclease YbeY from Francisella tularensis subsp. tularensis (strain SCHU S4 / Schu 4).